The chain runs to 265 residues: tRNA pseudouridine synthase A (265 aa).

The active-site Nucleophile is the Asp-53. Tyr-111 is a binding site for substrate.

The protein belongs to the tRNA pseudouridine synthase TruA family. Homodimer.

The enzyme catalyses uridine(38/39/40) in tRNA = pseudouridine(38/39/40) in tRNA. In terms of biological role, formation of pseudouridine at positions 38, 39 and 40 in the anticodon stem and loop of transfer RNAs. This chain is tRNA pseudouridine synthase A, found in Acinetobacter baumannii (strain SDF).